The following is a 430-amino-acid chain: Enolase (430 aa).

Gln-163 lines the (2R)-2-phosphoglycerate pocket. Glu-205 (proton donor) is an active-site residue. Residues Asp-242, Glu-287, and Asp-314 each contribute to the Mg(2+) site. (2R)-2-phosphoglycerate is bound by residues Lys-339, Arg-368, Ser-369, and Lys-390. The active-site Proton acceptor is the Lys-339.

This sequence belongs to the enolase family. Requires Mg(2+) as cofactor.

It localises to the cytoplasm. The protein localises to the secreted. It is found in the cell surface. It carries out the reaction (2R)-2-phosphoglycerate = phosphoenolpyruvate + H2O. It functions in the pathway carbohydrate degradation; glycolysis; pyruvate from D-glyceraldehyde 3-phosphate: step 4/5. In terms of biological role, catalyzes the reversible conversion of 2-phosphoglycerate (2-PG) into phosphoenolpyruvate (PEP). It is essential for the degradation of carbohydrates via glycolysis. This is Enolase from Clostridioides difficile (strain 630) (Peptoclostridium difficile).